The chain runs to 430 residues: L-cysteine:1D-myo-inositol 2-amino-2-deoxy-alpha-D-glucopyranoside ligase (430 aa).

Position 48 (Cys-48) interacts with Zn(2+). Residues 48–51, Thr-63, and 86–88 each bind L-cysteinyl-5'-AMP; these read CGIT and NIT. A 'HIGH' region motif is present at residues 50–60; it reads ITPYDSTHLGH. The 'ERGGDP' region signature appears at 192–197; that stretch reads ERGGDP. Trp-232 contacts L-cysteinyl-5'-AMP. Position 236 (Cys-236) interacts with Zn(2+). 254 to 256 is an L-cysteinyl-5'-AMP binding site; it reads GSD. Position 261 (His-261) interacts with Zn(2+). Ile-288 lines the L-cysteinyl-5'-AMP pocket. Residues 294–298 carry the 'KMSKS' region motif; sequence KMSKS.

This sequence belongs to the class-I aminoacyl-tRNA synthetase family. MshC subfamily. In terms of assembly, monomer. Requires Zn(2+) as cofactor.

The enzyme catalyses 1D-myo-inositol 2-amino-2-deoxy-alpha-D-glucopyranoside + L-cysteine + ATP = 1D-myo-inositol 2-(L-cysteinylamino)-2-deoxy-alpha-D-glucopyranoside + AMP + diphosphate + H(+). In terms of biological role, catalyzes the ATP-dependent condensation of GlcN-Ins and L-cysteine to form L-Cys-GlcN-Ins. The protein is L-cysteine:1D-myo-inositol 2-amino-2-deoxy-alpha-D-glucopyranoside ligase (mshC) of Corynebacterium efficiens (strain DSM 44549 / YS-314 / AJ 12310 / JCM 11189 / NBRC 100395).